Here is a 103-residue protein sequence, read N- to C-terminus: 6-pyruvoyl tetrahydrobiopterin synthase (103 aa).

At A1 the chain carries N-acetylalanine. H27 is a Zn(2+) binding site. Active-site charge relay system residues include H53 and E92.

Belongs to the PTPS family. In terms of assembly, homohexamer formed of two homotrimers in a head to head fashion. The cofactor is Zn(2+).

The catalysed reaction is 7,8-dihydroneopterin 3'-triphosphate = 6-pyruvoyl-5,6,7,8-tetrahydropterin + triphosphate + H(+). It functions in the pathway cofactor biosynthesis; tetrahydrobiopterin biosynthesis; tetrahydrobiopterin from 7,8-dihydroneopterin triphosphate: step 1/3. Involved in the biosynthesis of tetrahydrobiopterin, an essential cofactor of aromatic amino acid hydroxylases. Catalyzes the transformation of 7,8-dihydroneopterin triphosphate into 6-pyruvoyl tetrahydropterin. This chain is 6-pyruvoyl tetrahydrobiopterin synthase (pts), found in Salmo salar (Atlantic salmon).